Here is a 516-residue protein sequence, read N- to C-terminus: Cytochrome P450 6d1 (516 aa).

Cysteine 461 contacts heme.

It belongs to the cytochrome P450 family. Heme serves as cofactor.

It is found in the endoplasmic reticulum membrane. Its subcellular location is the microsome membrane. Metabolizes pyrethroid insecticides and other xenobiotics. The protein is Cytochrome P450 6d1 (CYP6D1) of Musca domestica (House fly).